Consider the following 431-residue polypeptide: Glucose-1-phosphate adenylyltransferase (431 aa).

Alpha-D-glucose 1-phosphate is bound by residues Tyr109, Gly175, 190 to 191, and Ser208; that span reads EK.

The protein belongs to the bacterial/plant glucose-1-phosphate adenylyltransferase family. In terms of assembly, homotetramer.

It carries out the reaction alpha-D-glucose 1-phosphate + ATP + H(+) = ADP-alpha-D-glucose + diphosphate. It participates in glycan biosynthesis; glycogen biosynthesis. Its function is as follows. Involved in the biosynthesis of ADP-glucose, a building block required for the elongation reactions to produce glycogen. Catalyzes the reaction between ATP and alpha-D-glucose 1-phosphate (G1P) to produce pyrophosphate and ADP-Glc. The protein is Glucose-1-phosphate adenylyltransferase of Alteromonas mediterranea (strain DSM 17117 / CIP 110805 / LMG 28347 / Deep ecotype).